The primary structure comprises 530 residues: Methionine--tRNA ligase (530 aa).

A 'HIGH' region motif is present at residues 18–28 (YYVNDVPHIGS). Positions 133, 136, 151, and 154 each coordinate Zn(2+). The short motif at 307–311 (KMGKS) is the 'KMSKS' region element. Lys-310 serves as a coordination point for ATP.

The protein belongs to the class-I aminoacyl-tRNA synthetase family. MetG type 2A subfamily. As to quaternary structure, monomer. It depends on Zn(2+) as a cofactor.

The protein resides in the cytoplasm. It carries out the reaction tRNA(Met) + L-methionine + ATP = L-methionyl-tRNA(Met) + AMP + diphosphate. In terms of biological role, is required not only for elongation of protein synthesis but also for the initiation of all mRNA translation through initiator tRNA(fMet) aminoacylation. In Nostoc sp. (strain PCC 7120 / SAG 25.82 / UTEX 2576), this protein is Methionine--tRNA ligase.